Consider the following 270-residue polypeptide: tRNA pseudouridine synthase A (270 aa).

Residue D60 is the Nucleophile of the active site. Position 118 (Y118) interacts with substrate.

Belongs to the tRNA pseudouridine synthase TruA family. Homodimer.

It catalyses the reaction uridine(38/39/40) in tRNA = pseudouridine(38/39/40) in tRNA. Functionally, formation of pseudouridine at positions 38, 39 and 40 in the anticodon stem and loop of transfer RNAs. This is tRNA pseudouridine synthase A from Cronobacter sakazakii (strain ATCC BAA-894) (Enterobacter sakazakii).